We begin with the raw amino-acid sequence, 234 residues long: MKIENKSDKEEDQMFITFEGIDASGKTSLLAKLKAHVVQKNLQGKCTFTWEPGGRKSPEIQTIRHLILNKESNLSPIAEAFLYSSARRIHLDKVILPNLAKNKVVFCDRFVDSSFAYQAFGRDLGFEKIKLLNELATDKKYPDITFILKISYEESMERRKARQEDEDRLEKEENSFYQKVIKGYDFLASYPEFQKRIFVIDASKNQEEIFESVLKILKDHKTFQTHPIYKDFFS.

Residue 20-27 participates in ATP binding; sequence GIDASGKT.

Belongs to the thymidylate kinase family.

It carries out the reaction dTMP + ATP = dTDP + ADP. In terms of biological role, phosphorylation of dTMP to form dTDP in both de novo and salvage pathways of dTTP synthesis. This is Thymidylate kinase from Mycoplasmopsis pulmonis (strain UAB CTIP) (Mycoplasma pulmonis).